The following is a 351-amino-acid chain: MVQFNGPHGKVTVSYLRQGGLNPPAPAPKGSFTGKTVLITGCSSGIGYQAALQIASLNPKRLILGTRTLAKGEAAKQEILATVGPSLDSSIIEVIPIECSDLSSVRQFTTTVRKTTPPGTLDCVLLSAGLALPTREVVTDESGHEWPTTFVVNVLAPALLALEFLPLLQSTPGSVVESVNSISYCNVTSEDISPLLSSQDEATGTTSALDFFNNPERWTTQRAYYEAKLMLMFVLEGLVQDQAQQQASQPGEDRKVLFLACCPGQCRTNLYRQFGLGVRAFMTLFNAVIARTAEQGARTLVTGLLLQGEEAMGKMWVNDRFDDWSPGITEEEWKVLQKRVWEEIKGVLGKA.

Residues Ile-46, Thr-66, Glu-98, Tyr-224, Lys-228, and Thr-268 each contribute to the NADP(+) site. Tyr-224 serves as the catalytic Proton donor. The Lowers pKa of active site Tyr role is filled by Lys-228.

Belongs to the short-chain dehydrogenases/reductases (SDR) family.

Its pathway is antibiotic biosynthesis. Its function is as follows. Short-chain dehydrogenase; part of the gene cluster that mediates the biosynthesis of sordarin and hypoxysordarin, glycoside antibiotics with a unique tetracyclic diterpene aglycone structure. First, the geranylgeranyl diphosphate synthase sdnC constructs GGDP from farnesyl diphosphate and isopentenyl diphosphate. The diterpene cyclase sdnA then catalyzes the cyclization of GGDP to afford cycloaraneosene. Cycloaraneosene is then hydroxylated four times by the putative cytochrome P450 monooxygenases sdnB, sdnE, sdnF and sdnH to give a hydroxylated cycloaraneosene derivative such as cycloaraneosene-8,9,13,19-tetraol. Although the order of the hydroxylations is unclear, at least C8, C9 and C13 of the cycloaraneosene skeleton are hydroxylated before the sordaricin formation. Dehydration of the 13-hydroxy group of the hydroxylated cycloaraneosene derivative might be catalyzed by an unassigned hypothetical protein such as sdnG and sdnP to construct the cyclopentadiene moiety. The FAD-dependent oxidoreductase sdnN is proposed to catalyze the oxidation at C9 of the hydroxylated cycloaraneosene derivative and also catalyze the Baeyer-Villiger oxidation to give the lactone intermediate. The presumed lactone intermediate would be hydrolyzed to give an acrolein moiety and a carboxylate moiety. Then, [4+2]cycloaddition would occur between the acrolein moiety and the cyclopentadiene moiety to give sordaricin. SdnN might also be involved in the [4+2]cycloaddition after the hypothesized oxidation to accommodate the oxidized product and prompt the [4+2]cycloaddition. GDP-6-deoxy-D-altrose may be biosynthesized from GDP-D-mannose by the putative GDP-mannose-4,6-dehydratase sdnI and the short-chain dehydrogenase sdnK. The glycosyltransferase sdnJ catalyzes the attachment of 6-deoxy-D-altrose onto the 19-hydroxy group of sordaricin to give 4'-O-demethylsordarin. The methyltransferase sdnD would complete the biosynthesis of sordarin. Sordarin can be further modified into hypoxysordarin. The unique acyl chain at the 3'-hydroxy group of hypoxysordarin would be constructed by an iterative type I PKS sdnO and the trans-acting polyketide methyltransferase sdnL. SdnL would be responsible for the introduction of an alpha-methyl group of the polyketide chain. Alternatively, the beta-lactamase-like protein sdnR might be responsible for the cleavage and transfer of the polyketide chain from the PKS sdnO to sordarin. Two putative cytochrome P450 monooxygenases, sdnQ and sdnT, might catalyze the epoxidations of the polyketide chain to complete the biosynthesis of hypoxysordarin. Transcriptional regulators sdnM and sdnS are presumably encoded for the transcriptional regulation of the expression of the sdn gene cluster. The polypeptide is Short-chain dehydrogenase sdnK (Sordaria araneosa (Pleurage araneosa)).